A 103-amino-acid chain; its full sequence is Co-chaperonin GroES (103 aa).

This sequence belongs to the GroES chaperonin family. Heptamer of 7 subunits arranged in a ring. Interacts with the chaperonin GroEL.

The protein resides in the cytoplasm. In terms of biological role, together with the chaperonin GroEL, plays an essential role in assisting protein folding. The GroEL-GroES system forms a nano-cage that allows encapsulation of the non-native substrate proteins and provides a physical environment optimized to promote and accelerate protein folding. GroES binds to the apical surface of the GroEL ring, thereby capping the opening of the GroEL channel. The chain is Co-chaperonin GroES from Microcystis aeruginosa (strain NIES-843 / IAM M-2473).